A 528-amino-acid chain; its full sequence is Probable histone-arginine methyltransferase 1.4 (528 aa).

Residue methionine 1 is modified to N-acetylmethionine. The 316-residue stretch at glutamate 144–serine 459 folds into the SAM-dependent MTase PRMT-type domain. The S-adenosyl-L-methionine site is built by glutamine 161, arginine 170, glycine 194, glutamate 216, and glutamate 246. Catalysis depends on residues glutamate 260 and glutamate 269. Position 274 (threonine 274) interacts with S-adenosyl-L-methionine.

The protein belongs to the class I-like SAM-binding methyltransferase superfamily. Protein arginine N-methyltransferase family.

Its subcellular location is the nucleus. It is found in the cytoplasm. The enzyme catalyses L-arginyl-[protein] + 2 S-adenosyl-L-methionine = N(omega),N(omega)-dimethyl-L-arginyl-[protein] + 2 S-adenosyl-L-homocysteine + 2 H(+). Methylates (mono- and asymmetric dimethylation) the guanidino nitrogens of arginyl residues in several proteins involved in DNA packaging, transcription regulation, and mRNA stability. Recruited to promoters upon gene activation, methylates histone H3 and activates transcription via chromatin remodeling. The protein is Probable histone-arginine methyltransferase 1.4 (PRMT14) of Arabidopsis thaliana (Mouse-ear cress).